A 591-amino-acid polypeptide reads, in one-letter code: L-fucose isomerase (591 aa).

Active-site proton acceptor residues include Glu-337 and Asp-361. Mn(2+)-binding residues include Glu-337, Asp-361, and His-528.

It belongs to the L-fucose isomerase family. Homohexamer. Mn(2+) serves as cofactor.

Its subcellular location is the cytoplasm. It carries out the reaction L-fucose = L-fuculose. It functions in the pathway carbohydrate degradation; L-fucose degradation; L-lactaldehyde and glycerone phosphate from L-fucose: step 1/3. In terms of biological role, converts the aldose L-fucose into the corresponding ketose L-fuculose. The sequence is that of L-fucose isomerase from Escherichia coli O6:H1 (strain CFT073 / ATCC 700928 / UPEC).